Reading from the N-terminus, the 371-residue chain is Histidinol-phosphate aminotransferase (371 aa).

Residue lysine 229 is modified to N6-(pyridoxal phosphate)lysine.

Belongs to the class-II pyridoxal-phosphate-dependent aminotransferase family. Histidinol-phosphate aminotransferase subfamily. In terms of assembly, homodimer. It depends on pyridoxal 5'-phosphate as a cofactor.

It carries out the reaction L-histidinol phosphate + 2-oxoglutarate = 3-(imidazol-4-yl)-2-oxopropyl phosphate + L-glutamate. It participates in amino-acid biosynthesis; L-histidine biosynthesis; L-histidine from 5-phospho-alpha-D-ribose 1-diphosphate: step 7/9. The chain is Histidinol-phosphate aminotransferase from Roseiflexus castenholzii (strain DSM 13941 / HLO8).